Consider the following 323-residue polypeptide: Fructose-1,6-bisphosphatase class 1 (323 aa).

Mg(2+) contacts are provided by Glu84, Asp103, Leu105, and Asp106. Substrate contacts are provided by residues 106–109 (DGSS), Asn198, and Lys264. Position 270 (Glu270) interacts with Mg(2+).

This sequence belongs to the FBPase class 1 family. As to quaternary structure, homotetramer. It depends on Mg(2+) as a cofactor.

It localises to the cytoplasm. It catalyses the reaction beta-D-fructose 1,6-bisphosphate + H2O = beta-D-fructose 6-phosphate + phosphate. The protein operates within carbohydrate biosynthesis; gluconeogenesis. This is Fructose-1,6-bisphosphatase class 1 from Hydrogenovibrio crunogenus (strain DSM 25203 / XCL-2) (Thiomicrospira crunogena).